Consider the following 186-residue polypeptide: uncharacterized protein (186 aa).

A signal peptide spans 1–18 (MKKFFFAAALVVSGLLVG). The N-palmitoyl cysteine moiety is linked to residue Cys19. Residue Cys19 is the site of S-diacylglycerol cysteine attachment.

The protein localises to the cell membrane. This is an uncharacterized protein from Salmonella typhimurium (strain LT2 / SGSC1412 / ATCC 700720).